The sequence spans 203 residues: Probable nicotinate-nucleotide adenylyltransferase (203 aa).

This sequence belongs to the NadD family.

It carries out the reaction nicotinate beta-D-ribonucleotide + ATP + H(+) = deamido-NAD(+) + diphosphate. The protein operates within cofactor biosynthesis; NAD(+) biosynthesis; deamido-NAD(+) from nicotinate D-ribonucleotide: step 1/1. In terms of biological role, catalyzes the reversible adenylation of nicotinate mononucleotide (NaMN) to nicotinic acid adenine dinucleotide (NaAD). The sequence is that of Probable nicotinate-nucleotide adenylyltransferase from Dictyoglomus turgidum (strain DSM 6724 / Z-1310).